The chain runs to 132 residues: Small ribosomal subunit protein uS12 (132 aa).

Residue Asp89 is modified to 3-methylthioaspartic acid. Positions 106 to 132 (GVKDRKKSRSKYGTKKPKEAAKTAAKK) are disordered. Positions 109–120 (DRKKSRSKYGTK) are enriched in basic residues.

It belongs to the universal ribosomal protein uS12 family. Part of the 30S ribosomal subunit. Contacts proteins S8 and S17. May interact with IF1 in the 30S initiation complex.

With S4 and S5 plays an important role in translational accuracy. Its function is as follows. Interacts with and stabilizes bases of the 16S rRNA that are involved in tRNA selection in the A site and with the mRNA backbone. Located at the interface of the 30S and 50S subunits, it traverses the body of the 30S subunit contacting proteins on the other side and probably holding the rRNA structure together. The combined cluster of proteins S8, S12 and S17 appears to hold together the shoulder and platform of the 30S subunit. This chain is Small ribosomal subunit protein uS12 (rpsL), found in Thermus thermophilus (strain ATCC BAA-163 / DSM 7039 / HB27).